A 443-amino-acid polypeptide reads, in one-letter code: Probable D-serine dehydratase (443 aa).

Residue K116 is modified to N6-(pyridoxal phosphate)lysine.

It belongs to the serine/threonine dehydratase family. DsdA subfamily. Pyridoxal 5'-phosphate is required as a cofactor.

It catalyses the reaction D-serine = pyruvate + NH4(+). This is Probable D-serine dehydratase from Bacillus cereus (strain AH187).